Reading from the N-terminus, the 45-residue chain is Myotoxin-3 (45 aa).

Intrachain disulfides connect cysteine 4/cysteine 36, cysteine 11/cysteine 30, and cysteine 18/cysteine 37.

Monomer. As to expression, expressed by the venom gland.

The protein resides in the secreted. Functionally, cationic peptide that possesses multiple functions. It acts as a cell-penetrating peptide (CPP), and as a potent voltage-gated potassium channel (Kv) inhibitor. It exhibits antimicrobial activities, hind limb paralysis, and severe muscle necrosis by a non-enzymatic mechanism. The polypeptide is Myotoxin-3 (Crotalus viridis viridis (Prairie rattlesnake)).